The following is a 277-amino-acid chain: Probable endonuclease 4 (277 aa).

Zn(2+) is bound by residues H67, H107, E141, D173, H176, H207, D220, H222, and E252.

Belongs to the AP endonuclease 2 family. It depends on Zn(2+) as a cofactor.

The catalysed reaction is Endonucleolytic cleavage to 5'-phosphooligonucleotide end-products.. Its function is as follows. Endonuclease IV plays a role in DNA repair. It cleaves phosphodiester bonds at apurinic or apyrimidinic (AP) sites, generating a 3'-hydroxyl group and a 5'-terminal sugar phosphate. The sequence is that of Probable endonuclease 4 from Finegoldia magna (strain ATCC 29328 / DSM 20472 / WAL 2508) (Peptostreptococcus magnus).